A 485-amino-acid chain; its full sequence is Glutamyl-tRNA(Gln) amidotransferase subunit A (485 aa).

Active-site charge relay system residues include lysine 76 and serine 151. Serine 175 acts as the Acyl-ester intermediate in catalysis.

It belongs to the amidase family. GatA subfamily. In terms of assembly, heterotrimer of A, B and C subunits.

It catalyses the reaction L-glutamyl-tRNA(Gln) + L-glutamine + ATP + H2O = L-glutaminyl-tRNA(Gln) + L-glutamate + ADP + phosphate + H(+). Functionally, allows the formation of correctly charged Gln-tRNA(Gln) through the transamidation of misacylated Glu-tRNA(Gln) in organisms which lack glutaminyl-tRNA synthetase. The reaction takes place in the presence of glutamine and ATP through an activated gamma-phospho-Glu-tRNA(Gln). This chain is Glutamyl-tRNA(Gln) amidotransferase subunit A, found in Methylococcus capsulatus (strain ATCC 33009 / NCIMB 11132 / Bath).